We begin with the raw amino-acid sequence, 245 residues long: Small ribosomal subunit protein uS2 (245 aa).

The protein belongs to the universal ribosomal protein uS2 family.

The chain is Small ribosomal subunit protein uS2 from Pseudomonas putida (strain W619).